The sequence spans 161 residues: Peroxynitrite isomerase 1 (161 aa).

Residues 17–23 carry the GXWXGXG motif; sequence GTWTGRG. Heme b is bound at residue histidine 152.

The protein belongs to the nitrobindin family. As to quaternary structure, homodimer. It depends on heme b as a cofactor.

The enzyme catalyses peroxynitrite = nitrate. The protein operates within nitrogen metabolism. Functionally, heme-binding protein able to scavenge peroxynitrite and to protect free L-tyrosine against peroxynitrite-mediated nitration, by acting as a peroxynitrite isomerase that converts peroxynitrite to nitrate. Therefore, this protein likely plays a role in peroxynitrite sensing and in the detoxification of reactive nitrogen and oxygen species (RNS and ROS, respectively). Is able to bind nitric oxide (NO) in vitro, but may act as a sensor of peroxynitrite levels in vivo. This Mycolicibacterium paratuberculosis (strain ATCC BAA-968 / K-10) (Mycobacterium paratuberculosis) protein is Peroxynitrite isomerase 1.